Consider the following 224-residue polypeptide: ATP-dependent dethiobiotin synthetase BioD (224 aa).

G14–V19 lines the ATP pocket. T18 is a Mg(2+) binding site. Residue K39 is part of the active site. A substrate-binding site is contributed by S43. ATP is bound by residues D56, E117–G120, and N177–E178. Mg(2+) contacts are provided by D56 and E117.

The protein belongs to the dethiobiotin synthetase family. In terms of assembly, homodimer. Mg(2+) is required as a cofactor.

The protein localises to the cytoplasm. It carries out the reaction (7R,8S)-7,8-diammoniononanoate + CO2 + ATP = (4R,5S)-dethiobiotin + ADP + phosphate + 3 H(+). It functions in the pathway cofactor biosynthesis; biotin biosynthesis; biotin from 7,8-diaminononanoate: step 1/2. Catalyzes a mechanistically unusual reaction, the ATP-dependent insertion of CO2 between the N7 and N8 nitrogen atoms of 7,8-diaminopelargonic acid (DAPA, also called 7,8-diammoniononanoate) to form a ureido ring. In Xanthomonas campestris pv. campestris (strain 8004), this protein is ATP-dependent dethiobiotin synthetase BioD.